The sequence spans 435 residues: Serine--tRNA ligase (435 aa).

242–244 serves as a coordination point for L-serine; it reads TAE. 273–275 contributes to the ATP binding site; sequence RSE. Residue E296 participates in L-serine binding. 360 to 363 is a binding site for ATP; that stretch reads EISS. S396 provides a ligand contact to L-serine.

The protein belongs to the class-II aminoacyl-tRNA synthetase family. Type-1 seryl-tRNA synthetase subfamily. Homodimer. The tRNA molecule binds across the dimer.

It localises to the cytoplasm. It catalyses the reaction tRNA(Ser) + L-serine + ATP = L-seryl-tRNA(Ser) + AMP + diphosphate + H(+). It carries out the reaction tRNA(Sec) + L-serine + ATP = L-seryl-tRNA(Sec) + AMP + diphosphate + H(+). It functions in the pathway aminoacyl-tRNA biosynthesis; selenocysteinyl-tRNA(Sec) biosynthesis; L-seryl-tRNA(Sec) from L-serine and tRNA(Sec): step 1/1. Its function is as follows. Catalyzes the attachment of serine to tRNA(Ser). Is also able to aminoacylate tRNA(Sec) with serine, to form the misacylated tRNA L-seryl-tRNA(Sec), which will be further converted into selenocysteinyl-tRNA(Sec). The sequence is that of Serine--tRNA ligase from Vibrio parahaemolyticus serotype O3:K6 (strain RIMD 2210633).